Here is a 349-residue protein sequence, read N- to C-terminus: Green-sensitive opsin-2 (349 aa).

The Extracellular portion of the chain corresponds to Met-1–Gln-36. Residues Asn-2 and Asn-15 are each glycosylated (N-linked (GlcNAc...) asparagine). Residues Phe-37 to Cys-61 form a helical membrane-spanning segment. Residues Thr-62–Asn-73 are Cytoplasmic-facing. Residues Phe-74–Ile-99 traverse the membrane as a helical segment. Topologically, residues Asn-100–Glu-113 are extracellular. Cys-110 and Cys-187 are oxidised to a cystine. A helical transmembrane segment spans residues Gly-114–Ile-133. Residues Glu-134–His-152 lie on the Cytoplasmic side of the membrane. The chain crosses the membrane as a helical span at residues Ala-153 to Ser-176. At Arg-177–Ser-202 the chain is on the extracellular side. Residues Tyr-203–Val-230 traverse the membrane as a helical segment. The Cytoplasmic segment spans residues Lys-231–Lys-252. A helical membrane pass occupies residues Met-253–Phe-276. The Extracellular portion of the chain corresponds to Phe-277–Ser-284. Residues Ala-285 to Leu-309 form a helical membrane-spanning segment. At Lys-296 the chain carries N6-(retinylidene)lysine. The Cytoplasmic portion of the chain corresponds to Asn-310–Ala-349. Positions Gly-329 to Ala-349 are disordered. A compositionally biased stretch (low complexity) spans Ser-334–Ala-349.

It belongs to the G-protein coupled receptor 1 family. Opsin subfamily. Post-translationally, phosphorylated on some or all of the serine and threonine residues present in the C-terminal region. The color pigments are found in the cone photoreceptor cells.

Its subcellular location is the membrane. Visual pigments are the light-absorbing molecules that mediate vision. They consist of an apoprotein, opsin, covalently linked to cis-retinal. This Carassius auratus (Goldfish) protein is Green-sensitive opsin-2.